Consider the following 712-residue polypeptide: Osmolarity two-component system protein SSK1 (712 aa).

The tract at residues 73–114 (ADNTSSNNTNDNSCRSKSNGAGSGANLSVNSNTKSSVSPTAG) is disordered. The span at 74 to 85 (DNTSSNNTNDNS) shows a compositional bias: low complexity. Residues 87–113 (RSKSNGAGSGANLSVNSNTKSSVSPTA) show a composition bias toward polar residues. Phosphoserine occurs at positions 110, 195, 327, 351, 368, and 380. The interval 340–362 (KADLKGKDGNSSPQEFKLITDEE) is disordered. The interval 448–468 (EVQRRKEDVTPASPILTSSQT) is disordered. In terms of domain architecture, Response regulatory spans 505-647 (NVLIVEDNVI…WLSKKITEWG (143 aa)). Aspartate 554 is subject to 4-aspartylphosphate. Residues 672 to 712 (KSPQKPIAPSNPHSFKQATSMTPTHSPVRKNSNLSPTQIEL) are disordered. Residue serine 673 is modified to Phosphoserine. Residues 682 to 712 (NPHSFKQATSMTPTHSPVRKNSNLSPTQIEL) are compositionally biased toward polar residues. Threonine 693 bears the Phosphothreonine mark. Phosphoserine occurs at positions 703 and 706.

Belongs to the SSK1 family. Interacts with SSK2, SSK22 and YPD1. In terms of processing, the phosphorelay mechanism involves the sequential transfer of a phosphate group from 'His-576' (H1) to 'Asp-1144' (D1) of SLN1, then to 'His-64' (H2) of YPD1 and finally to Asp-554 (D2) of SSK1.

It localises to the cytoplasm. Its function is as follows. Final receptor of the SLN1-YPD1-SSK1 two-component regulatory system, which controls activity of the HOG1 pathway in response to changes in the osmolarity of the extracellular environment. Under normal osmotic conditions, maintained in a phosphorylated and inactive state by the phosphorelay intermediate protein YPD1. Under conditions of high osmolarity, the histidine kinase SLN1 is no longer active and the unphosphorylated form of SSK1 interacts with and activates SSK2 and SSK22, two MAPKKKs that further stimulate the PBS2-HOG1 MAPKK-MAPK cascade. Unphosphorylated SSK1 is subsequently degraded by the UBC7-dependent ubiquitin-proteasome system to down-regulate the HOG1 pathway after completion of the osmotic adaptation. In Saccharomyces cerevisiae (strain ATCC 204508 / S288c) (Baker's yeast), this protein is Osmolarity two-component system protein SSK1.